A 596-amino-acid chain; its full sequence is Structural protein precursor VP8 (596 aa).

The protein localises to the virion. In terms of biological role, 120 subunits of the putative clamp protein VP8b appear to stabilize the capsid shell. The protein is Structural protein precursor VP8 of Oryza latifolia (Indian wild rice).